The following is a 258-amino-acid chain: Short-chain dehydrogenase/reductase FrzI (258 aa).

NADP(+) is bound by residues I21, N41, and N94. Residues S143 and S144 each act as proton donor in the active site. NADP(+) is bound by residues Y157, K161, V191, and T193. Catalysis depends on Y157, which acts as the Proton acceptor. K161 (lowers pKa of active site Tyr) is an active-site residue.

The protein belongs to the short-chain dehydrogenases/reductases (SDR) family.

It catalyses the reaction (1S,3S,6S,7S,8R)-7-hydroxy-6-[(4-methoxyphenyl)methyl]-3-(methylamino)-5-azatricyclo[6.3.1.0(1,5)]dodecan-9-one + NADPH + H(+) = (1S,3S,6S,7S,8S,9S)-6-[(4-methoxyphenyl)methyl]-3-(methylamino)-5-azatricyclo[6.3.1.0(1,5)]dodecane-7,9-diol + NADP(+). It participates in secondary metabolite biosynthesis. In terms of biological role, short-chain dehydrogenase/reductase; part of the gene cluster that mediates the biosynthesis of the alkaloid (-)-FR901483, a potent immunosuppressant that shows efficacy in animal models and a probable inhibitor of purine nucleotide biosynthesis by targeting phosphoribosylpyrophosphate amidotransferase (PPAT). Within the pathway, FrzI catalyzes the formation of dephospho-(-)-FR901483 from the aza-tricyclic intermediate produced by FrzH. The biosynthesis of (-)-FR901483 starts with the condensation of two L-tyrosines to yield (S,S)-dityrosyl-piperazine. This process occurs in 3 steps with the non-canonical nonribosomal peptide synthetase FrzA catalyzing the reduction of L-tyrosine into L-tyrosinal, the spontaneous condensation of 2 L-tyrosinal units, and the subsequent reduction by the NmrA-like family domain-containing oxidoreductase FrzB. The cytochrome P450 monooxygenase FrzC then performs coupling between N10 and C1' to morph the piperazine into a 1,4-diazabicyclo[3.2.1]octane spiro-fused to a 2,5-cyclohexadienone. The dienone portion is further reduced to cyclohexanone by the flavin-dependent reductase FrzD. The methyltranserases (MTs) FrzE and FrzF are then involved in the methylation at the C10' amine and the C4 phenolic oxygen, respectively. The order of the two MTs appear to be interchangeable. Cleavage of the C9-N10' bond by the dioxygenase FrzG then leads to formation of a conjugated iminium. In addition to the oxidation of C9, an additional dehydrogenation between C7 and C8 can occur to give a likely shunt product. The next biosynthetic step is the intramolecular aldol condensation catalyzed by the newly identified aldolase FrzH to yield an aza-tricyclic product with the formation of a C9-C3' bond. The short-chain dehydrogenase/reductase FrzI then produces dephospho-(-)-FR901483 that is phosphorylated at C4'-OH into (-)-FR901483 by the phosphotransferase FrzJ. The chain is Short-chain dehydrogenase/reductase FrzI from Cladobotryum sp.